The following is a 210-amino-acid chain: Glycerol-3-phosphate acyltransferase (210 aa).

Transmembrane regions (helical) follow at residues 10–30 (ALIL…GIVI), 59–79 (PAAL…VLIA), 87–107 (AAQL…WLGF), 116–136 (FLGT…LTWL), and 161–181 (LLLG…LIFI).

This sequence belongs to the PlsY family. In terms of assembly, probably interacts with PlsX.

The protein resides in the cell inner membrane. The catalysed reaction is an acyl phosphate + sn-glycerol 3-phosphate = a 1-acyl-sn-glycero-3-phosphate + phosphate. The protein operates within lipid metabolism; phospholipid metabolism. Functionally, catalyzes the transfer of an acyl group from acyl-phosphate (acyl-PO(4)) to glycerol-3-phosphate (G3P) to form lysophosphatidic acid (LPA). This enzyme utilizes acyl-phosphate as fatty acyl donor, but not acyl-CoA or acyl-ACP. The sequence is that of Glycerol-3-phosphate acyltransferase from Cereibacter sphaeroides (strain ATCC 17025 / ATH 2.4.3) (Rhodobacter sphaeroides).